Reading from the N-terminus, the 30-residue chain is Cytochrome b6/f complex 12.6 kDa peptide (30 aa).

Positions 1–30 (SGSGVRSAKKGGKAQGGQAGVGYKGSTEPG) are disordered. Gly residues predominate over residues 13–23 (KAQGGQAGVGY).

It is found in the plastid. It localises to the chloroplast. In terms of biological role, may be a component of the cytochrome b6/f complex which is part of the photosynthetic respiratory chain. The protein is Cytochrome b6/f complex 12.6 kDa peptide of Euglena gracilis.